The sequence spans 234 residues: Glucosamine-6-phosphate deaminase (234 aa).

The active-site Proton acceptor; for enolization step is the Asp62. Asn128 acts as the For ring-opening step in catalysis. Residue His130 is the Proton acceptor; for ring-opening step of the active site. The active-site For ring-opening step is Glu135.

The protein belongs to the glucosamine/galactosamine-6-phosphate isomerase family. NagB subfamily.

It catalyses the reaction alpha-D-glucosamine 6-phosphate + H2O = beta-D-fructose 6-phosphate + NH4(+). The protein operates within amino-sugar metabolism; N-acetylneuraminate degradation; D-fructose 6-phosphate from N-acetylneuraminate: step 5/5. Its function is as follows. Catalyzes the reversible isomerization-deamination of glucosamine 6-phosphate (GlcN6P) to form fructose 6-phosphate (Fru6P) and ammonium ion. The chain is Glucosamine-6-phosphate deaminase from Ligilactobacillus salivarius (strain UCC118) (Lactobacillus salivarius).